We begin with the raw amino-acid sequence, 392 residues long: D-amino-acid oxidase 2 (392 aa).

FAD is bound by residues serine 10, isoleucine 13, arginine 33, aspartate 34, alanine 45, serine 46, glycine 50, and asparagine 52. The anthranilate site is built by phenylalanine 56, tyrosine 245, tyrosine 262, and arginine 311. Positions 245, 262, and 311 each coordinate (R)-lactate. Positions 311, 361, 362, 364, and 366 each coordinate FAD. Serine 362 lines the anthranilate pocket. Serine 362 provides a ligand contact to (R)-lactate. The Microbody targeting signal signature appears at 390–392 (AKL).

This sequence belongs to the DAMOX/DASOX family. FAD is required as a cofactor.

The protein localises to the peroxisome matrix. The catalysed reaction is a D-alpha-amino acid + O2 + H2O = a 2-oxocarboxylate + H2O2 + NH4(+). It carries out the reaction D-methionine + O2 + H2O = 4-methylsulfanyl-2-oxobutanoate + H2O2 + NH4(+). The enzyme catalyses D-serine + O2 + H2O = 3-hydroxypyruvate + H2O2 + NH4(+). It catalyses the reaction D-histidine + O2 + H2O = 3-(imidazol-5-yl)pyruvate + H2O2 + NH4(+). The catalysed reaction is D-proline + O2 = 1-pyrroline-2-carboxylate + H2O2. It carries out the reaction D-alanine + O2 + H2O = pyruvate + H2O2 + NH4(+). The enzyme catalyses D-leucine + O2 + H2O = 4-methyl-2-oxopentanoate + H2O2 + NH4(+). It catalyses the reaction D-valine + O2 + H2O = 3-methyl-2-oxobutanoate + H2O2 + NH4(+). In terms of biological role, catalyzes the oxidative deamination of D-amino acids with broad substrate specificity. Enables the organism to utilize D-amino acids as a source of nutrients. Enables the organism to utilize D-alanine, D-cysteine, D-histidine, D-leucine, D-methionine, D-phenylalanine, D-proline, D-serine, D-threonine, D-aspartate and D-valine as a nitrogen source and may also contribute to utlization of D-tryptophan, D-tyrosine and D-asparagine as a nitrogen source. Protects the organism from the toxicity of D-amino acids, including from D-alanine. May play a role in its interaction with the host. In Cryptococcus deuterogattii (strain R265) (Cryptococcus gattii VGII (strain R265)), this protein is D-amino-acid oxidase 2.